The chain runs to 1249 residues: Fanconi anemia group J protein (1249 aa).

The Helicase ATP-binding domain maps to 11–442 (GGVKIYFPYK…KDHEPLRAVC (432 aa)). Residues 102–127 (QGTSRHFNYPSTPPSERNGTSSTCQD) are compositionally biased toward polar residues. A disordered region spans residues 102–131 (QGTSRHFNYPSTPPSERNGTSSTCQDSPEK). Residues 158–175 (KKRIRPLETTQQIRKRHC) carry the Nuclear localization signal motif. Residue 185–192 (AKVDSGKT) participates in ATP binding. Residues Cys283, Cys298, Cys310, and Cys350 each contribute to the [4Fe-4S] cluster site. The DEAH box motif lies at 393-396 (DEAH). A phosphoserine mark is found at Ser505, Ser927, Ser930, Ser956, Ser990, Ser1004, and Ser1032. Residues 888–1063 (HQKVLNVSIK…ESSNLTVNTS (176 aa)) are interaction with BRCA1. 2 disordered regions span residues 1018 to 1042 (KATPELGSSENSASSPPRFKTEKME) and 1108 to 1127 (VSEEDKQSTSNRDFETEAED). Residues 1023–1032 (LGSSENSASS) show a composition bias toward polar residues. The segment covering 1110–1122 (EEDKQSTSNRDFE) has biased composition (basic and acidic residues). Ser1237 carries the phosphoserine modification. N6-acetyllysine is present on Lys1249.

It belongs to the DEAD box helicase family. DEAH subfamily. As to quaternary structure, interacts with the replication protein A complex (RPA) via the RPA1 subunit; following DNA damage they colocalize in foci in the nucleus. Binds directly to the BRCT domains of BRCA1. Interacts with the CIA complex components CIAO1, CIAO2B and MMS19. Requires [4Fe-4S] cluster as cofactor. Phosphorylated. Phosphorylation is necessary for interaction with BRCA1, and is cell-cycle regulated. In terms of processing, acetylation at Lys-1249 facilitates DNA end processing required for repair and checkpoint signaling. In terms of tissue distribution, ubiquitously expressed, with highest levels in testis.

It is found in the nucleus. The protein localises to the cytoplasm. It catalyses the reaction Couples ATP hydrolysis with the unwinding of duplex DNA at the replication fork by translocating in the 5'-3' direction. This creates two antiparallel DNA single strands (ssDNA). The leading ssDNA polymer is the template for DNA polymerase III holoenzyme which synthesizes a continuous strand.. The catalysed reaction is ATP + H2O = ADP + phosphate + H(+). Helicase activity on forked substrates is stimulated by replication protein A complex heterotrimer (RPA1, RPA2, RPA3). Helicase activity on G-quadruplex DNA is stimulated 3-fold by RPA, and inhibited by MSH2/MSH6. Unwinding of G-quadruplex DNA is inhibited by ATP-gamma-S and telomestatin (TMS); TMA does not inhibit unwinding of forked-duplex DNA. Helicase activity on dsDNA and G-quadruplex DNA is inhibited by porphyrin derivatives meso-tetra (N-methyl-4-pyridyl) porphine tetra tosylate (T4) and N-methyl mesoporphyrin IX (NMM). In terms of biological role, DNA-dependent ATPase and 5'-3' DNA helicase required for the maintenance of chromosomal stability. Acts late in the Fanconi anemia pathway, after FANCD2 ubiquitination. Involved in the repair of DNA double-strand breaks by homologous recombination in a manner that depends on its association with BRCA1. Involved in the repair of abasic sites at replication forks by promoting the degradation of DNA-protein cross-links: acts by catalyzing unfolding of HMCES DNA-protein cross-link via its helicase activity, exposing the underlying DNA and enabling cleavage of the DNA-protein adduct by the SPRTN metalloprotease. Can unwind RNA:DNA substrates. Unwinds G-quadruplex DNA; unwinding requires a 5'-single stranded tail. This Homo sapiens (Human) protein is Fanconi anemia group J protein.